Reading from the N-terminus, the 249-residue chain is DNA repair protein RecO (249 aa).

The protein belongs to the RecO family.

Functionally, involved in DNA repair and RecF pathway recombination. This is DNA repair protein RecO from Polaromonas sp. (strain JS666 / ATCC BAA-500).